The following is a 344-amino-acid chain: Centromere protein L (344 aa).

The disordered stretch occupies residues 1 to 32 (MAGGRPAGSAIEMEGAMRTLPSSGRPSGTGWQ). The segment covering 20 to 32 (LPSSGRPSGTGWQ) has biased composition (polar residues).

This sequence belongs to the CENP-L/IML3 family. Component of the CENPA-HI complex, at least composed of CENPH, CENPI, CENPK, CENPL, CENPM, CENPO and CENPP.

The protein resides in the nucleus. It localises to the chromosome. Its subcellular location is the centromere. Component of the CENPA-HI complex, a centromeric complex involved in assembly of kinetochore proteins, mitotic progression and chromosome segregation. The protein is Centromere protein L (CENPL) of Gallus gallus (Chicken).